A 572-amino-acid chain; its full sequence is MRTSQYLLSTLKETPADAEVISHQLMLRAGMIRKLASGLYTWLPTGVRVLKKVENIVREEMNNAGAIEVSMPVVQPADLWQESGRWEQYGPELLRFVDRGERPFVLGPTHEEVITDLIRNELSSYKQLPLNFYQIQTKFRDEVRPRFGVMRSREFLMKDAYSFHTSQESLQETYDAMYAAYSKIFSRMGLDFRAVQADTGSIGGSASHEFQVLAQSGEDDVVFSDTSDYAANIELAEAIAPKEPRAAATQEMTLVDTPNAKTIAELVEQFNLPIEKTVKTLLVKAVEGSSFPLVALLVRGDHELNEVKAEKLPQVASPLTFATEEEIRAVVKAGPGSLGPVNMPIPVVIDRTVAAMSDFAAGANIDGKHYFGINWDRDVATPEIADIRNVVAGDPSPDGQGTLLIKRGIEVGHIFQLGTKYSEALKASVQGEDGRNQILTMGCYGIGVTRVVAAAIEQNYDERGIVWPDAIAPFQVAILPMNMHKSFRVQELAEKLYSELRAQGIEVLLDDRKERPGVMFADMELIGIPHTIVLGDRNLDNDDIEYKYRRNGEKQLIKTGDIVDYLVKQIKG.

The protein belongs to the class-II aminoacyl-tRNA synthetase family. ProS type 1 subfamily. As to quaternary structure, homodimer.

It is found in the cytoplasm. It carries out the reaction tRNA(Pro) + L-proline + ATP = L-prolyl-tRNA(Pro) + AMP + diphosphate. Its function is as follows. Catalyzes the attachment of proline to tRNA(Pro) in a two-step reaction: proline is first activated by ATP to form Pro-AMP and then transferred to the acceptor end of tRNA(Pro). As ProRS can inadvertently accommodate and process non-cognate amino acids such as alanine and cysteine, to avoid such errors it has two additional distinct editing activities against alanine. One activity is designated as 'pretransfer' editing and involves the tRNA(Pro)-independent hydrolysis of activated Ala-AMP. The other activity is designated 'posttransfer' editing and involves deacylation of mischarged Ala-tRNA(Pro). The misacylated Cys-tRNA(Pro) is not edited by ProRS. The sequence is that of Proline--tRNA ligase from Escherichia coli O17:K52:H18 (strain UMN026 / ExPEC).